A 356-amino-acid chain; its full sequence is Putative mitogen-activated protein kinase 14C (356 aa).

One can recognise a Protein kinase domain in the interval 20–305; it reads YEFVRFLGGG…AAEAMLHPYL (286 aa). ATP-binding positions include 26-34 and K49; that span reads LGGGSFGQV. D147 serves as the catalytic Proton acceptor. At T177 the chain carries Phosphothreonine.

This sequence belongs to the protein kinase superfamily. CMGC Ser/Thr protein kinase family. MAP kinase subfamily. Mg(2+) serves as cofactor. The phosphorylation on Thr-177 activates the enzyme. A conserved Tyr, which must also be phosphorylated to activate the enzyme in closely related sequences, is replaced by His-179 in this sequence.

It catalyses the reaction L-seryl-[protein] + ATP = O-phospho-L-seryl-[protein] + ADP + H(+). The catalysed reaction is L-threonyl-[protein] + ATP = O-phospho-L-threonyl-[protein] + ADP + H(+). Kinase involved in a signal transduction pathway. This is Putative mitogen-activated protein kinase 14C (p38c) from Drosophila melanogaster (Fruit fly).